A 66-amino-acid chain; its full sequence is MRKDIHPEYVECEVTCACGNHFVVMSNKPQLKIDICNKCHPFFTGSEKIVDTTGRVDKFKKKYNLK.

Zn(2+) is bound by residues C16, C18, C36, and C39.

The protein belongs to the bacterial ribosomal protein bL31 family. Type A subfamily. In terms of assembly, part of the 50S ribosomal subunit. Requires Zn(2+) as cofactor.

Binds the 23S rRNA. The chain is Large ribosomal subunit protein bL31 from Nitratiruptor sp. (strain SB155-2).